Here is a 126-residue protein sequence, read N- to C-terminus: Fluoride-specific ion channel FluC (126 aa).

4 helical membrane passes run 2-22, 37-57, 65-85, and 101-121; these read LTFA…GAWL, WGTL…VALI, AWIR…FSTF, and AAAY…LATV. Na(+) contacts are provided by glycine 77 and threonine 80.

Belongs to the fluoride channel Fluc/FEX (TC 1.A.43) family.

The protein localises to the cell inner membrane. The enzyme catalyses fluoride(in) = fluoride(out). With respect to regulation, na(+) is not transported, but it plays an essential structural role and its presence is essential for fluoride channel function. Functionally, fluoride-specific ion channel. Important for reducing fluoride concentration in the cell, thus reducing its toxicity. This is Fluoride-specific ion channel FluC from Bordetella parapertussis (strain 12822 / ATCC BAA-587 / NCTC 13253).